The sequence spans 403 residues: GTPase Obg (403 aa).

Residues 1-159 form the Obg domain; that stretch reads MKFIDESLIR…RDLLLELMLL (159 aa). The 174-residue stretch at 160–333 folds into the OBG-type G domain; that stretch reads ADVGMLGFPN…LCRDIMDFII (174 aa). GTP contacts are provided by residues 166-173, 191-195, 213-216, 283-286, and 314-316; these read GFPNAGKS, FTTLV, DIPG, NKID, and SAA. Positions 173 and 193 each coordinate Mg(2+). Residues 364-403 form a disordered region; the sequence is YQFDDDEDWDDDWTEEDDDEDWDDDWSEEDDEGIEFIYKP. Positions 365–397 are enriched in acidic residues; that stretch reads QFDDDEDWDDDWTEEDDDEDWDDDWSEEDDEGI.

Belongs to the TRAFAC class OBG-HflX-like GTPase superfamily. OBG GTPase family. In terms of assembly, monomer. Mg(2+) serves as cofactor.

It is found in the cytoplasm. In terms of biological role, an essential GTPase which binds GTP, GDP and possibly (p)ppGpp with moderate affinity, with high nucleotide exchange rates and a fairly low GTP hydrolysis rate. Plays a role in control of the cell cycle, stress response, ribosome biogenesis and in those bacteria that undergo differentiation, in morphogenesis control. This is GTPase Obg from Haemophilus influenzae (strain PittGG).